Reading from the N-terminus, the 700-residue chain is MLASALLVFLCCFKGHAGSSPHFLQQPEDMVVLLGEEARLPCALGAYRGLVQWTKDGLALGGERDLPGWSRYWISGNSASGQHDLHIKPVELEDEASYECQASQAGLRSRPAQLHVMVPPEAPQVLGGPSVSLVAGVPGNLTCRSRGDSRPAPELLWFRDGIRLDGSSFHQTTLKDKATGTVENTLFLTPSSHDDGATLICRARSQALPTGRDTAVTLSLQYPPMVTLSAEPQTVQEGEKVTFLCQATAQPPVTGYRWAKGGSPVLGARGPRLEVVADATFLTEPVSCEVSNAVGSANRSTALEVLYGPILQAKPKSVSVDVGKDASFSCVWRGNPLPRITWTRMGGSQVLSSGPTLRLPSVALEDAGDYVCRAEPRRTGLGGGKAQARLTVNAPPVVTALQPAPAFLRGPARLQCVVFASPAPDSVVWSWDEGFLEAGSLGRFLVEAFPAPEVEGGQGPGLISVLHISGTQESDFTTGFNCSARNRLGEGRVQIHLGRRDLLPTVRIVAGAASAATSLLMVITGVVLCCWRHGSLSKQKNLVRIPGSSEGSSSRGPEEETGSSEDRGPIVHTDHSDLVLEEKEALETKDPTNGYYRVRGVSVSLSLGEAPGGGLFLPPPSPIGLPGTPTYYDFKPHLDLVPPCRLYRARAGYLTTPHPRAFTSYMKPTSFGPPELSSGTPPFPYATLSPPSHQRLQTHV.

The N-terminal stretch at 1-19 (MLASALLVFLCCFKGHAGS) is a signal peptide. At 20–507 (SPHFLQQPED…GRRDLLPTVR (488 aa)) the chain is on the extracellular side. 5 Ig-like C2-type domains span residues 21-115 (PHFL…AQLH), 120-219 (PEAP…VTLS), 224-304 (PMVT…TALE), 309-391 (PILQ…ARLT), and 395-497 (PPVV…QIHL). Residues C42 and C100 are joined by a disulfide bond. N-linked (GlcNAc...) asparagine glycosylation occurs at N140. Intrachain disulfides connect C143-C201 and C245-C288. A Cell attachment site motif is present at residues 146–148 (RGD). N298 is a glycosylation site (N-linked (GlcNAc...) asparagine). Cystine bridges form between C330/C372 and C416/C482. Residue N481 is glycosylated (N-linked (GlcNAc...) asparagine). Residues 508–528 (IVAGAASAATSLLMVITGVVL) traverse the membrane as a helical segment. The Cytoplasmic portion of the chain corresponds to 529 to 700 (CCWRHGSLSK…PSHQRLQTHV (172 aa)). Positions 542–576 (LVRIPGSSEGSSSRGPEEETGSSEDRGPIVHTDHS) are disordered. S563 carries the post-translational modification Phosphoserine. Basic and acidic residues predominate over residues 564-576 (SEDRGPIVHTDHS). 3 positions are modified to phosphotyrosine: Y595, Y596, and Y653. Positions 671 to 700 (FGPPELSSGTPPFPYATLSPPSHQRLQTHV) are disordered. A compositionally biased stretch (polar residues) spans 689–700 (SPPSHQRLQTHV).

It belongs to the immunoglobulin superfamily. Homodimer. Interacts with NPHS2/podocin (via the C-terminus). Interacts with NPHS1 (via the Ig-like domains). Interacts with FYN. N-glycosylated. Post-translationally, phosphorylated at Ser-548 or Ser-549; due to site ambiguity, the exact position of the serine phosphorylation could not be determined. Phosphorylation at residues Tyr-631 and/or Tyr-632. FYN mediates tyrosine phosphorylation in pancreatic beta-cells. In terms of processing, the extracellular domain is cleaved leading to the generation of a soluble fragment and a membrane-bound C-terminal fragment, which is further cleaved by gamma-secretase. As to expression, highly expressed in beta-cells of the pancreatic islets. Expression is seen in podocytes of kidney glomeruli, and in the cerebellum and hindbrain at 12.5 dpc, in the spinal cord at 10.5 dpc, and in retina and hypothalamus at 13.5 dpc.

It localises to the cell membrane. In terms of biological role, may regulate basal insulin secretion. The sequence is that of Kin of IRRE-like protein 2 (Kirrel2) from Mus musculus (Mouse).